The chain runs to 249 residues: uncharacterized protein (249 aa).

It localises to the cytoplasm. It is found in the nucleus. Its subcellular location is the nucleolus. This is an uncharacterized protein from Schizosaccharomyces pombe (strain 972 / ATCC 24843) (Fission yeast).